Consider the following 300-residue polypeptide: ATP-dependent (S)-NAD(P)H-hydrate dehydratase (300 aa).

Residues 7 to 289 (IEARLKSIIP…ESIPSVFDQV (283 aa)) enclose the YjeF C-terminal domain. (6S)-NADPHX is bound by residues G107 and 160–166 (NVMEYRR). Residues 194–198 (KGQVD) and 213–222 (GSPRRCGGQG) contribute to the ATP site. D223 is a (6S)-NADPHX binding site.

This sequence belongs to the NnrD/CARKD family. It depends on Mg(2+) as a cofactor.

The catalysed reaction is (6S)-NADHX + ATP = ADP + phosphate + NADH + H(+). The enzyme catalyses (6S)-NADPHX + ATP = ADP + phosphate + NADPH + H(+). In terms of biological role, catalyzes the dehydration of the S-form of NAD(P)HX at the expense of ATP, which is converted to ADP. Together with NAD(P)HX epimerase, which catalyzes the epimerization of the S- and R-forms, the enzyme allows the repair of both epimers of NAD(P)HX, a damaged form of NAD(P)H that is a result of enzymatic or heat-dependent hydration. The chain is ATP-dependent (S)-NAD(P)H-hydrate dehydratase from Entamoeba histolytica (strain ATCC 30459 / HM-1:IMSS / ABRM).